Reading from the N-terminus, the 246-residue chain is MNKEEQRKNSAAQSIRWHFPSIHPEGRKFFVIAVIISAIITYFSWLWMAWPLGVLCFCVAAFFRDPIRTVPEGDGLIVSPADGMVCLIADVPPPPELAGADGLGDAPLTRVSIFMSVFDVHINRAPVPGRIARIAYIPGAFVNADLDKASEKNERQHFMIETKEGINVGLTQIAGLIARRIVPLTKVEDYVERGERIGLIRFGSRLDVYLPAGVTPQVALGQRCLAGETILGQIGSQAKPLTGMRL.

Serine 204 serves as the catalytic Schiff-base intermediate with substrate; via pyruvic acid. The residue at position 204 (serine 204) is a Pyruvic acid (Ser); by autocatalysis.

The protein belongs to the phosphatidylserine decarboxylase family. PSD-A subfamily. In terms of assembly, heterodimer of a large membrane-associated beta subunit and a small pyruvoyl-containing alpha subunit. It depends on pyruvate as a cofactor. Is synthesized initially as an inactive proenzyme. Formation of the active enzyme involves a self-maturation process in which the active site pyruvoyl group is generated from an internal serine residue via an autocatalytic post-translational modification. Two non-identical subunits are generated from the proenzyme in this reaction, and the pyruvate is formed at the N-terminus of the alpha chain, which is derived from the carboxyl end of the proenzyme. The post-translation cleavage follows an unusual pathway, termed non-hydrolytic serinolysis, in which the side chain hydroxyl group of the serine supplies its oxygen atom to form the C-terminus of the beta chain, while the remainder of the serine residue undergoes an oxidative deamination to produce ammonia and the pyruvoyl prosthetic group on the alpha chain.

It is found in the cell membrane. The enzyme catalyses a 1,2-diacyl-sn-glycero-3-phospho-L-serine + H(+) = a 1,2-diacyl-sn-glycero-3-phosphoethanolamine + CO2. It functions in the pathway phospholipid metabolism; phosphatidylethanolamine biosynthesis; phosphatidylethanolamine from CDP-diacylglycerol: step 2/2. Catalyzes the formation of phosphatidylethanolamine (PtdEtn) from phosphatidylserine (PtdSer). The sequence is that of Phosphatidylserine decarboxylase proenzyme from Zymomonas mobilis subsp. mobilis (strain ATCC 31821 / ZM4 / CP4).